Reading from the N-terminus, the 294-residue chain is Golgi phosphoprotein 3 homolog sauron (294 aa).

Residues 1-52 (MNRSDGLVRRSVKPRENGGAEGGLNANTPDDNQDALDNLKDQEDNIDDGDSK) are disordered. The segment covering 37–52 (DNLKDQEDNIDDGDSK) has biased composition (basic and acidic residues). A 1,2-diacyl-sn-glycero-3-phospho-(1D-myo-inositol 4-phosphate) is bound by residues W77, R86, K167, and R170. The segment at 186–197 (EKQNFLLFDMTT) is beta-hairpin required for oligomerization.

The protein belongs to the GOLPH3/VPS74 family. In terms of assembly, homooligomer. Interacts with botv, Ext2 and ttv. Interacts with Vti1. Interacts with Vps35, Rab5, Chc, Rab11, zip, Pav and Septin1.

The protein resides in the golgi apparatus membrane. It localises to the cytoplasmic vesicle. The protein localises to the cleavage furrow. Functionally, phosphatidylinositol-4-phosphate-binding protein that links Golgi membranes to the cytoskeleton and may participate in the tensile force required for vesicle budding from the Golgi. Thereby, may play a role in Golgi membrane trafficking and could indirectly give its flattened shape to the Golgi apparatus. May also bind to the coatomer to regulate Golgi membrane trafficking. May play a role in anterograde transport from the Golgi to the plasma membrane and regulate secretion. Also involved in the control of the localization of Golgi enzymes through interaction with their cytoplasmic part. Functions in cytokinesis by regulating contractile ring formation and vesicle trafficking during cleavage furrow ingression. May also have a role in the intital steps of central spindle formation. Can also bind phosphatidylinositol-3-phosphate and phosphatidylinositol-5-phosphate in vitro. This Drosophila melanogaster (Fruit fly) protein is Golgi phosphoprotein 3 homolog sauron.